The primary structure comprises 1111 residues: Cellulose synthase-like protein D4 (1111 aa).

Disordered stretches follow at residues 1-26 (MAST…KFAR) and 175-202 (DYSS…MMKR). The span at 192–202 (GNNNNMSMMKR) shows a compositional bias: polar residues. The next 2 helical transmembrane spans lie at 266–286 (AIIS…CFFL) and 297–317 (AIWL…SWIL). Residues Asp-397 and Asp-809 contribute to the active site. Helical transmembrane passes span 891-911 (LFLI…QFIV), 914-934 (LSIS…GLAV), 963-983 (LYAV…SFTL), 1007-1027 (LMIP…VAFI), 1040-1060 (LIGG…FAKG), and 1070-1090 (TIVF…WTAI).

Belongs to the glycosyltransferase 2 family. Plant cellulose synthase-like D subfamily.

The protein localises to the golgi apparatus membrane. Its function is as follows. Thought to be a Golgi-localized beta-glycan synthase that polymerize the backbones of noncellulosic polysaccharides (hemicelluloses) of plant cell wall. This Arabidopsis thaliana (Mouse-ear cress) protein is Cellulose synthase-like protein D4 (CSLD4).